The sequence spans 282 residues: ADP-ribosyl cyclase/cyclic ADP-ribose hydrolase (282 aa).

Residues 1–24 (MSPVAIIACVCLAVTLTSISPSEA) form the signal peptide. Disulfide bonds link C39–C58, C75–C155, C136–C149, C230–C251, and C263–C272.

Belongs to the ADP-ribosyl cyclase family. Has different isoforms which may be the result of different amounts of phosphorylation. As to expression, immature occoyctes. Oocytes.

It is found in the cytoplasmic vesicle. It catalyses the reaction NAD(+) = cyclic ADP-beta-D-ribose + nicotinamide + H(+). It carries out the reaction nicotinate + NADP(+) = nicotinate-adenine dinucleotide phosphate + nicotinamide. The catalysed reaction is 2'-phospho-cyclic ADP-ribose + nicotinate = nicotinate-adenine dinucleotide phosphate. Activity is presumably regulated by its sequestration in vesicles before egg fertilization. After fertilization and upon NADase release, it could then be regulated via its potential phosphorylation sites. Synthesizes cyclic ADP-ribose (cADPR), a second messenger for calcium mobilization from endoplasmic reticulum; ADP-ribose is a minor product. Synthesizes the Ca(2+) mobilizer nicotinate-adenine dinucleotide phosphate from 2'-phospho-cADPR and nicotinic acid as well as from NADP(+) and nicotinic acid; with NADP(+) as substrate preferentially catalyzes NADP(+) hydrolysis rather than NAADP(+) synthesis, about 70-fold better at pH 7.4. Has cADPR hydrolase activity at very high enzyme concentrations, which is probably not physiological. The conversion of NAD(+) into ADP-ribose is also only observed at high enzyme concentrations and results from the hydrolysis of cADP-ribose. The protein is ADP-ribosyl cyclase/cyclic ADP-ribose hydrolase of Aplysia californica (California sea hare).